We begin with the raw amino-acid sequence, 428 residues long: C4-dicarboxylate transport protein (428 aa).

9 helical membrane passes run 7 to 27 (SLYF…IVAP), 40 to 60 (FIKL…VLGI), 75 to 95 (LALL…LLIV), 143 to 163 (AFAR…GIAL), 196 to 216 (PIGA…GSLF), 221 to 241 (LMAT…GAIA), 306 to 326 (IYLT…MTLG), 329 to 349 (FTLL…TGSG), and 351 to 371 (IVLA…LALI).

This sequence belongs to the dicarboxylate/amino acid:cation symporter (DAACS) (TC 2.A.23) family.

Its subcellular location is the cell inner membrane. Functionally, responsible for the transport of dicarboxylates such as succinate, fumarate, and malate from the periplasm across the membrane. This is C4-dicarboxylate transport protein from Solibacter usitatus (strain Ellin6076).